We begin with the raw amino-acid sequence, 223 residues long: MRVLVVEDNALLRHHLKVQIQDAGHQVDDAEDAKEADYYLNEHLPDIAIVDLGLPDEDGLSLICRWRSNDVSLPILVLTARESWQDKVEVLSAGADDYVTKPFHIEEVMARMQALMRRNSGLASQVISLPPFQVDLSRRELSINDEVIKLTAFEYTIMETLIRNNGKVVSKDSLMLQLYPDAELRESHTIDVLMGRLRKKIQAQYPQEVITTVRGQGYLFELR.

Residues 2 to 116 form the Response regulatory domain; it reads RVLVVEDNAL…EVMARMQALM (115 aa). Residue D51 is modified to 4-aspartylphosphate. Residues 124–222 constitute a DNA-binding region (ompR/PhoB-type); the sequence is SQVISLPPFQ…VRGQGYLFEL (99 aa).

In terms of processing, phosphorylated by PhoQ.

It is found in the cytoplasm. Member of the two-component regulatory system PhoQ/PhoP involved in virulence, adaptation to low Mg(2+) environments and the control of acid resistance genes. The polypeptide is Transcriptional regulatory protein PhoP (phoP) (Escherichia coli O157:H7).